Consider the following 188-residue polypeptide: Crossover junction endodeoxyribonuclease RuvC (188 aa).

Residues Asp-14, Glu-74, and Asp-149 contribute to the active site. Positions 14, 74, and 149 each coordinate Mg(2+).

Belongs to the RuvC family. Homodimer which binds Holliday junction (HJ) DNA. The HJ becomes 2-fold symmetrical on binding to RuvC with unstacked arms; it has a different conformation from HJ DNA in complex with RuvA. In the full resolvosome a probable DNA-RuvA(4)-RuvB(12)-RuvC(2) complex forms which resolves the HJ. The cofactor is Mg(2+).

The protein resides in the cytoplasm. The catalysed reaction is Endonucleolytic cleavage at a junction such as a reciprocal single-stranded crossover between two homologous DNA duplexes (Holliday junction).. Functionally, the RuvA-RuvB-RuvC complex processes Holliday junction (HJ) DNA during genetic recombination and DNA repair. Endonuclease that resolves HJ intermediates. Cleaves cruciform DNA by making single-stranded nicks across the HJ at symmetrical positions within the homologous arms, yielding a 5'-phosphate and a 3'-hydroxyl group; requires a central core of homology in the junction. The consensus cleavage sequence is 5'-(A/T)TT(C/G)-3'. Cleavage occurs on the 3'-side of the TT dinucleotide at the point of strand exchange. HJ branch migration catalyzed by RuvA-RuvB allows RuvC to scan DNA until it finds its consensus sequence, where it cleaves and resolves the cruciform DNA. This chain is Crossover junction endodeoxyribonuclease RuvC, found in Bacteroides fragilis (strain ATCC 25285 / DSM 2151 / CCUG 4856 / JCM 11019 / LMG 10263 / NCTC 9343 / Onslow / VPI 2553 / EN-2).